The sequence spans 131 residues: Methylglyoxal synthase (131 aa).

The 131-residue stretch at 1-131 (MKIALIAHDK…GDLDYRKFRK (131 aa)) folds into the MGS-like domain. Substrate contacts are provided by residues His-8, Lys-12, 34–37 (TGTT), and 54–55 (SG). Asp-60 serves as the catalytic Proton donor/acceptor. Substrate is bound at residue His-87.

This sequence belongs to the methylglyoxal synthase family.

The catalysed reaction is dihydroxyacetone phosphate = methylglyoxal + phosphate. Its function is as follows. Catalyzes the formation of methylglyoxal from dihydroxyacetone phosphate. The chain is Methylglyoxal synthase from Bacillus cytotoxicus (strain DSM 22905 / CIP 110041 / 391-98 / NVH 391-98).